The chain runs to 576 residues: Arginine--tRNA ligase (576 aa).

The 'HIGH' region signature appears at 122–132; that stretch reads PNVAKEMHVGH.

It belongs to the class-I aminoacyl-tRNA synthetase family. Monomer.

It is found in the cytoplasm. It carries out the reaction tRNA(Arg) + L-arginine + ATP = L-arginyl-tRNA(Arg) + AMP + diphosphate. This Pectobacterium carotovorum subsp. carotovorum (strain PC1) protein is Arginine--tRNA ligase.